The sequence spans 83 residues: Large ribosomal subunit protein bL31B (83 aa).

This sequence belongs to the bacterial ribosomal protein bL31 family. Type B subfamily. In terms of assembly, part of the 50S ribosomal subunit.

The sequence is that of Large ribosomal subunit protein bL31B from Lactobacillus gasseri (strain ATCC 33323 / DSM 20243 / BCRC 14619 / CIP 102991 / JCM 1131 / KCTC 3163 / NCIMB 11718 / NCTC 13722 / AM63).